The chain runs to 150 residues: UPF0756 membrane protein YE1142 (150 aa).

The next 4 helical transmembrane spans lie at 1–21 (MAAL…GIIS), 51–71 (YGLT…IASG), 88–108 (ILAI…VSLM), and 114–134 (VVAG…GVPV).

It belongs to the UPF0756 family.

It localises to the cell membrane. The chain is UPF0756 membrane protein YE1142 from Yersinia enterocolitica serotype O:8 / biotype 1B (strain NCTC 13174 / 8081).